Consider the following 150-residue polypeptide: S-protein homolog 28 (150 aa).

An N-linked (GlcNAc...) asparagine glycan is attached at Asn122.

It belongs to the plant self-incompatibility (S1) protein family.

The protein localises to the secreted. The sequence is that of S-protein homolog 28 from Arabidopsis thaliana (Mouse-ear cress).